A 385-amino-acid polypeptide reads, in one-letter code: 1-deoxy-D-xylulose 5-phosphate reductoisomerase 1 (385 aa).

NADPH-binding residues include Thr11, Gly12, Ser13, Ile14, Asn39, and Asn122. Lys123 contributes to the 1-deoxy-D-xylulose 5-phosphate binding site. Glu124 serves as a coordination point for NADPH. Asp148 is a binding site for Mn(2+). 4 residues coordinate 1-deoxy-D-xylulose 5-phosphate: Ser149, Glu150, Ser174, and His197. Glu150 contributes to the Mn(2+) binding site. Gly203 serves as a coordination point for NADPH. 1-deoxy-D-xylulose 5-phosphate is bound by residues Ser210, Asn215, Lys216, and Glu219. Residue Glu219 coordinates Mn(2+).

The protein belongs to the DXR family. Mg(2+) serves as cofactor. The cofactor is Mn(2+).

The catalysed reaction is 2-C-methyl-D-erythritol 4-phosphate + NADP(+) = 1-deoxy-D-xylulose 5-phosphate + NADPH + H(+). It functions in the pathway isoprenoid biosynthesis; isopentenyl diphosphate biosynthesis via DXP pathway; isopentenyl diphosphate from 1-deoxy-D-xylulose 5-phosphate: step 1/6. Functionally, catalyzes the NADPH-dependent rearrangement and reduction of 1-deoxy-D-xylulose-5-phosphate (DXP) to 2-C-methyl-D-erythritol 4-phosphate (MEP). The protein is 1-deoxy-D-xylulose 5-phosphate reductoisomerase 1 of Bacillus cereus (strain ATCC 14579 / DSM 31 / CCUG 7414 / JCM 2152 / NBRC 15305 / NCIMB 9373 / NCTC 2599 / NRRL B-3711).